A 557-amino-acid chain; its full sequence is 2-succinyl-5-enolpyruvyl-6-hydroxy-3-cyclohexene-1-carboxylate synthase (557 aa).

It belongs to the TPP enzyme family. MenD subfamily. In terms of assembly, homodimer. Mg(2+) is required as a cofactor. Requires Mn(2+) as cofactor. The cofactor is thiamine diphosphate.

It carries out the reaction isochorismate + 2-oxoglutarate + H(+) = 5-enolpyruvoyl-6-hydroxy-2-succinyl-cyclohex-3-ene-1-carboxylate + CO2. Its pathway is quinol/quinone metabolism; 1,4-dihydroxy-2-naphthoate biosynthesis; 1,4-dihydroxy-2-naphthoate from chorismate: step 2/7. The protein operates within quinol/quinone metabolism; menaquinone biosynthesis. Functionally, catalyzes the thiamine diphosphate-dependent decarboxylation of 2-oxoglutarate and the subsequent addition of the resulting succinic semialdehyde-thiamine pyrophosphate anion to isochorismate to yield 2-succinyl-5-enolpyruvyl-6-hydroxy-3-cyclohexene-1-carboxylate (SEPHCHC). This chain is 2-succinyl-5-enolpyruvyl-6-hydroxy-3-cyclohexene-1-carboxylate synthase, found in Yersinia enterocolitica serotype O:8 / biotype 1B (strain NCTC 13174 / 8081).